Here is a 266-residue protein sequence, read N- to C-terminus: Indole-3-glycerol phosphate synthase (266 aa).

Belongs to the TrpC family.

It catalyses the reaction 1-(2-carboxyphenylamino)-1-deoxy-D-ribulose 5-phosphate + H(+) = (1S,2R)-1-C-(indol-3-yl)glycerol 3-phosphate + CO2 + H2O. The protein operates within amino-acid biosynthesis; L-tryptophan biosynthesis; L-tryptophan from chorismate: step 4/5. This is Indole-3-glycerol phosphate synthase from Herminiimonas arsenicoxydans.